A 357-amino-acid polypeptide reads, in one-letter code: UDP-N-acetylglucosamine 2-epimerase homolog (357 aa).

It belongs to the UDP-N-acetylglucosamine 2-epimerase family.

This chain is UDP-N-acetylglucosamine 2-epimerase homolog, found in Methanococcus maripaludis (strain DSM 14266 / JCM 13030 / NBRC 101832 / S2 / LL).